The following is a 205-amino-acid chain: LIM domain-containing protein PLIM2b (205 aa).

2 consecutive LIM zinc-binding domains span residues 8-68 (DKCN…LFKE) and 102-162 (DKCA…LFME). A disordered region spans residues 177–205 (RTASGNTLPPEPTEDVAVEAKEENGVSES). Positions 194 to 205 (VEAKEENGVSES) are enriched in basic and acidic residues.

As to quaternary structure, interacts with F-actin. As to expression, predominantly expressed in flowers and in pollen grains. Detected in vasculature and roots.

It is found in the cytoplasm. It localises to the cytoskeleton. Binds to actin filaments and promotes cross-linking into thick bundles. Has an actin-stabilizing activity. The actin regulatory activities are inhibited by pH &gt; 6.8 but are [Ca(2+)] independent. This chain is LIM domain-containing protein PLIM2b, found in Arabidopsis thaliana (Mouse-ear cress).